The sequence spans 730 residues: Catalase-peroxidase (730 aa).

The span at 1–11 (MDAKTDDKDAG) shows a compositional bias: basic and acidic residues. The first 21 residues, 1–21 (MDAKTDDKDAGKCPFSSGSHA), serve as a signal peptide directing secretion. The interval 1–24 (MDAKTDDKDAGKCPFSSGSHAHRN) is disordered. The tryptophyl-tyrosyl-methioninium (Trp-Tyr) (with M-244) cross-link spans 96 to 218 (WHSAGTYRIS…LGAVQMGLIY (123 aa)). The Proton acceptor role is filled by histidine 97. The segment at residues 218–244 (YVNPEGPNGNPDPVGSAKDIRETFYRM) is a cross-link (tryptophyl-tyrosyl-methioninium (Tyr-Met) (with W-96)). Histidine 259 lines the heme b pocket.

This sequence belongs to the peroxidase family. Peroxidase/catalase subfamily. In terms of assembly, homodimer or homotetramer. It depends on heme b as a cofactor. Formation of the three residue Trp-Tyr-Met cross-link is important for the catalase, but not the peroxidase activity of the enzyme.

It catalyses the reaction H2O2 + AH2 = A + 2 H2O. It carries out the reaction 2 H2O2 = O2 + 2 H2O. Bifunctional enzyme with both catalase and broad-spectrum peroxidase activity. In Rhodopseudomonas palustris (strain BisA53), this protein is Catalase-peroxidase.